Here is a 198-residue protein sequence, read N- to C-terminus: ADP-ribosylation factor-like protein 3 (198 aa).

Met1 is modified (N-acetylmethionine). Residue 24 to 31 participates in GTP binding; sequence GLDNAGKT. Residue Lys50 forms a Glycyl lysine isopeptide (Lys-Gly) (interchain with G-Cter in ubiquitin) linkage. GTP is bound by residues 74-78 and 133-136; these read DVGGQ and NKQD.

It belongs to the small GTPase superfamily. Arf family. In terms of assembly, interacts with SYS1 and SLO1.

The protein resides in the golgi apparatus. In terms of biological role, involved in the targeting of ARL1 to the Golgi. Can bind and hydrolyze GTP. This Saccharomyces cerevisiae (strain ATCC 204508 / S288c) (Baker's yeast) protein is ADP-ribosylation factor-like protein 3 (ARL3).